The chain runs to 295 residues: Phosphatidylserine decarboxylase proenzyme (295 aa).

Catalysis depends on charge relay system; for autoendoproteolytic cleavage activity residues D101, H158, and S262. S262 serves as the catalytic Schiff-base intermediate with substrate; via pyruvic acid; for decarboxylase activity. S262 bears the Pyruvic acid (Ser); by autocatalysis mark.

This sequence belongs to the phosphatidylserine decarboxylase family. PSD-B subfamily. Prokaryotic type I sub-subfamily. Heterodimer of a large membrane-associated beta subunit and a small pyruvoyl-containing alpha subunit. It depends on pyruvate as a cofactor. Is synthesized initially as an inactive proenzyme. Formation of the active enzyme involves a self-maturation process in which the active site pyruvoyl group is generated from an internal serine residue via an autocatalytic post-translational modification. Two non-identical subunits are generated from the proenzyme in this reaction, and the pyruvate is formed at the N-terminus of the alpha chain, which is derived from the carboxyl end of the proenzyme. The autoendoproteolytic cleavage occurs by a canonical serine protease mechanism, in which the side chain hydroxyl group of the serine supplies its oxygen atom to form the C-terminus of the beta chain, while the remainder of the serine residue undergoes an oxidative deamination to produce ammonia and the pyruvoyl prosthetic group on the alpha chain. During this reaction, the Ser that is part of the protease active site of the proenzyme becomes the pyruvoyl prosthetic group, which constitutes an essential element of the active site of the mature decarboxylase.

It is found in the cell membrane. It catalyses the reaction a 1,2-diacyl-sn-glycero-3-phospho-L-serine + H(+) = a 1,2-diacyl-sn-glycero-3-phosphoethanolamine + CO2. It functions in the pathway phospholipid metabolism; phosphatidylethanolamine biosynthesis; phosphatidylethanolamine from CDP-diacylglycerol: step 2/2. Functionally, catalyzes the formation of phosphatidylethanolamine (PtdEtn) from phosphatidylserine (PtdSer). The polypeptide is Phosphatidylserine decarboxylase proenzyme (Pasteurella multocida (strain Pm70)).